The following is a 148-amino-acid chain: Glutamate mutase sigma subunit (148 aa).

The 138-residue stretch at 3 to 140 (NPTIVIGVIG…KRDIERVMQS (138 aa)) folds into the B12-binding domain. Adenosylcob(III)alamin-binding positions include 13-17 (ADCHA), His-16, 61-63 (SSI), and 93-97 (NLVIG).

Belongs to the methylaspartate mutase GlmS subunit family. As to quaternary structure, heterotetramer composed of 2 epsilon subunits (GlmE) and 2 sigma subunits (GlmS). GlmE exists as a homodimer and GlmS as a monomer. It depends on adenosylcob(III)alamin as a cofactor.

It catalyses the reaction (2S,3S)-3-methyl-L-aspartate = L-glutamate. Its pathway is amino-acid degradation; L-glutamate degradation via mesaconate pathway; acetate and pyruvate from L-glutamate: step 1/4. Functionally, catalyzes the carbon skeleton rearrangement of L-glutamate to L-threo-3-methylaspartate ((2S,3S)-3-methylaspartate). This chain is Glutamate mutase sigma subunit, found in Yersinia enterocolitica serotype O:8 / biotype 1B (strain NCTC 13174 / 8081).